Reading from the N-terminus, the 664-residue chain is DNA ligase (664 aa).

NAD(+)-binding positions include aspartate 32 to aspartate 36 and serine 80 to leucine 81. Lysine 122 serves as the catalytic N6-AMP-lysine intermediate. Residues arginine 144, glutamate 178, and lysine 314 each contribute to the NAD(+) site. Zn(2+) contacts are provided by cysteine 407, cysteine 410, cysteine 423, and cysteine 429. A BRCT domain is found at isoleucine 587–glycine 664.

Belongs to the NAD-dependent DNA ligase family. LigA subfamily. Mg(2+) serves as cofactor. Mn(2+) is required as a cofactor.

The catalysed reaction is NAD(+) + (deoxyribonucleotide)n-3'-hydroxyl + 5'-phospho-(deoxyribonucleotide)m = (deoxyribonucleotide)n+m + AMP + beta-nicotinamide D-nucleotide.. In terms of biological role, DNA ligase that catalyzes the formation of phosphodiester linkages between 5'-phosphoryl and 3'-hydroxyl groups in double-stranded DNA using NAD as a coenzyme and as the energy source for the reaction. It is essential for DNA replication and repair of damaged DNA. The chain is DNA ligase from Clostridium novyi (strain NT).